A 183-amino-acid chain; its full sequence is Ferritin light chain 1 (183 aa).

One can recognise a Ferritin-like diiron domain in the interval 7 to 156 (QNYSTEVEAA…NHLTNLRRVA (150 aa)). Glu54, Glu57, Glu58, Glu61, and Glu64 together coordinate Fe cation.

It belongs to the ferritin family. As to quaternary structure, oligomer of 24 subunits. There are two types of subunits: L (light) chain and H (heavy) chain. The major chain can be light or heavy, depending on the species and tissue type. The functional molecule forms a roughly spherical shell with a diameter of 12 nm and contains a central cavity into which the insoluble mineral iron core is deposited. Interacts with NCOA4.

The protein resides in the cytoplasm. The protein localises to the cytoplasmic vesicle. It localises to the autophagosome. Its subcellular location is the autolysosome. Functionally, stores iron in a soluble, non-toxic, readily available form. Important for iron homeostasis. Iron is taken up in the ferrous form and deposited as ferric hydroxides after oxidation. Also plays a role in delivery of iron to cells. Mediates iron uptake in capsule cells of the developing kidney. Degraded to release iron upon autophagy activation by nutrient starvation. The chain is Ferritin light chain 1 (Ftl1) from Mus musculus (Mouse).